Reading from the N-terminus, the 359-residue chain is Very-long-chain (3R)-3-hydroxyacyl-CoA dehydratase (359 aa).

Over 1 to 144 (MSALTPHVYW…RKDPFLGLKK (144 aa)) the chain is Cytoplasmic. The 90-residue stretch at 3–92 (ALTPHVYWAQ…QEEVWWNRLT (90 aa)) folds into the CS domain. Positions 109-133 (LDESDAEMELREKEEKINKVSFESR) form a coiled coil. The helical transmembrane segment at 145–165 (GFLFMYNLVQFLGYSWIFVNM) threads the bilayer. Residues 166–186 (TVRLFILGQDSFYDTFHTIAD) are Lumenal-facing. A helical membrane pass occupies residues 187 to 207 (VMYFCQMLAIMEVINPAVGLV). Residues 208 to 209 (KT) are Cytoplasmic-facing. The chain crosses the membrane as a helical span at residues 210-230 (GVMPAFIQVMGRNFILFVIFG). At 231–239 (SLEDMQNKP) the chain is on the lumenal side. Residues 240 to 260 (VVFFVFYLWSTIEIFRYPFYM) traverse the membrane as a helical segment. Over 261-277 (LACIDTEWKLLTWLRYT) the chain is Cytoplasmic. The chain crosses the membrane as a helical span at residues 278-298 (IWMPLYPLGVLAEAVAVIQSI). Catalysis depends on residues Y283 and E290. Topologically, residues 299 to 317 (PIFDETKLLSIPLPKATGL) are lumenal. The helical transmembrane segment at 318–338 (SLSFSYILQLYLVVMFLGLFI) threads the bilayer. The Cytoplasmic segment spans residues 339 to 359 (NFRHLFKQRTRRFRTKKRKAN).

This sequence belongs to the very long-chain fatty acids dehydratase HACD family.

It localises to the endoplasmic reticulum membrane. The catalysed reaction is a very-long-chain (3R)-3-hydroxyacyl-CoA = a very-long-chain (2E)-enoyl-CoA + H2O. It carries out the reaction (3R)-hydroxyhexadecanoyl-CoA = (2E)-hexadecenoyl-CoA + H2O. It functions in the pathway lipid metabolism; fatty acid biosynthesis. In terms of biological role, catalyzes the third of the four reactions of the long-chain fatty acids elongation cycle. This endoplasmic reticulum-bound enzymatic process, allows the addition of two carbons to the chain of long- and very long-chain fatty acids/VLCFAs per cycle. This enzyme catalyzes the dehydration of the 3-hydroxyacyl-CoA intermediate into trans-2,3-enoyl-CoA, within each cycle of fatty acid elongation. Thereby, it participates in the production of VLCFAs of different chain lengths that are involved in multiple biological processes as precursors of membrane lipids and lipid mediators. Involved in Rac1-signaling pathways leading to the modulation of gene expression. The sequence is that of Very-long-chain (3R)-3-hydroxyacyl-CoA dehydratase from Danio rerio (Zebrafish).